The primary structure comprises 316 residues: Adenine deaminase (316 aa).

Positions 14, 16, and 194 each coordinate Zn(2+). The active-site Proton donor is Glu-197. Position 275 (Asp-275) interacts with Zn(2+). Residue Asp-276 coordinates substrate.

Belongs to the metallo-dependent hydrolases superfamily. Adenosine and AMP deaminases family. Adenine deaminase type 2 subfamily. Zn(2+) serves as cofactor.

It carries out the reaction adenine + H2O + H(+) = hypoxanthine + NH4(+). Functionally, catalyzes the hydrolytic deamination of adenine to hypoxanthine. Plays an important role in the purine salvage pathway and in nitrogen catabolism. The protein is Adenine deaminase of Pseudomonas entomophila (strain L48).